The primary structure comprises 362 residues: Endopolygalacturonase II (362 aa).

Positions 1 to 20 (MHSFASLLRYGLAAGATLAS) are cleaved as a signal peptide. The propeptide occupies 21 to 27 (ASPIEAR). A disulfide bridge connects residues C30 and C45. One copy of the PbH1 1 repeat lies at 156–186 (SDDITLTDITINNADGDSLGGHNTDAFDVGN). D201 functions as the Proton donor in the catalytic mechanism. A disulfide bridge links C203 with C219. 4 PbH1 repeats span residues 209-229 (GENI…SIGS), 238-259 (VKNV…RIKT), 267-289 (VSEI…VIQQ), and 301-322 (TNGV…DSKA). H223 is a catalytic residue. N-linked (GlcNAc...) asparagine glycosylation occurs at N240. 2 disulfides stabilise this stretch: C329/C334 and C353/C362.

The protein belongs to the glycosyl hydrolase 28 family.

The protein resides in the secreted. The catalysed reaction is (1,4-alpha-D-galacturonosyl)n+m + H2O = (1,4-alpha-D-galacturonosyl)n + (1,4-alpha-D-galacturonosyl)m.. Its function is as follows. Involved in maceration and soft-rotting of plant tissue. Hydrolyzes the 1,4-alpha glycosidic bonds of de-esterified pectate in the smooth region of the plant cell wall. This Aspergillus awamori (Black koji mold) protein is Endopolygalacturonase II (pgaII).